We begin with the raw amino-acid sequence, 853 residues long: MSTPENFDAHTPMMQQYLKLKAQHPEILLFYRMGDFYELFYDDAKRASQLLDISLTKRGASAGEPIPMAGIPYHAVENYLAKLVNQGESVAICEQIGDPATSKGPVERKVVRIVTPGTISDEALLQERQDNLLAAIWQDSKGFGYATLDISSGRFRLSEPADRETMAAELQRTNPAELLYAEDFAEMSLIEGRRGLRRRPLWEFEIDTARQQLNLQFGTRDLVGFGVENAPRGLCAAGCLLQYAKDTQRTTLPHIRSITMERQQDSIIMDAATRRNLEITQNLAGGAENTLASVLDCTVTPMGSRMLKRWLHMPVRDTRVLLERQQTIGALQDFTAELQPVLRQVGDLERILARLALRTARPRDLARMRHAFQQLPELRAQLENVDSAPVQALREKMGEFAELRDLLERAIIDTPPVLVRDGGVIASGYNEELDEWRALADGATDYLERLEVRERERTGLDTLKVGFNAVHGYYIQISRGQSHLAPINYMRRQTLKNAERYIIPELKEYEDKVLTSKGKALALEKQLYEELFDLLLPHLEALQQSASALAELDVLVNLAERAYTLNYTCPTFIDKPGIRITEGRHPVVEQVLNEPFIANPLNLSPQRRMLIITGPNMGGKSTYMRQTALIALMAYIGSYVPAQKVEIGPIDRIFTRVGAADDLASGRSTFMVEMTETANILHNATEYSLVLMDEIGRGTSTYDGLSLAWACAENLANKIKALTLFATHYFELTQLPEKMEGVANVHLDALEHGDTIAFMHSVQDGAASKSYGLAVAALAGVPKEVIKRARQKLRELESISPNAAATQVDGTQMSLLSVPEETSPAVEALENLDPDSLTPRQALEWIYRLKSLV.

Position 614–621 (614–621 (GPNMGGKS)) interacts with ATP.

Belongs to the DNA mismatch repair MutS family.

Functionally, this protein is involved in the repair of mismatches in DNA. It is possible that it carries out the mismatch recognition step. This protein has a weak ATPase activity. The sequence is that of DNA mismatch repair protein MutS from Escherichia coli O6:K15:H31 (strain 536 / UPEC).